The following is a 468-amino-acid chain: FAD-linked oxidoreductase hasG (468 aa).

The 175-residue stretch at 37–211 (LGKIPAAVVQ…VEATFRAYPW (175 aa)) folds into the FAD-binding PCMH-type domain.

The protein belongs to the oxygen-dependent FAD-linked oxidoreductase family. FAD serves as cofactor.

The protein operates within secondary metabolite biosynthesis. FAD-linked oxidoreductase; part of the gene cluster that mediates the biosynthesis of hexadehydro-astechrome (HAS), a tryptophan-derived iron(III)-complex that acts as a virulence factor in infected mice. Within the pathway, hasG converts the prenyl to a methylbutadienyl side chain. The HAS biosynthesis begins with the synthesis of a tethered Trp-Ala dipeptide by the NRPS hasD. The 7-dimethylallyltryptophan synthase hasE then catalyzes the prenylation of the hasD-tethered tryptophan or the resulting tethered Trp-Ala dipeptide at the C-7 position of the indole moiety. HAS biosynthesis continues via tethered intermediates with the succesive actions of the cytochrome P450 monooxygenase hasH, the O-methyltransferase hasC, and the FAD-linked oxidoreductase hasG. The resulting O-methylated diketopiperazine is then released from hasD. Finally, three O-methylated diketopiperazine molecules assemble in a trimeric complex with Fe(III) to produce hexadehydro-astechrome. In Aspergillus fumigatus (strain CBS 144.89 / FGSC A1163 / CEA10) (Neosartorya fumigata), this protein is FAD-linked oxidoreductase hasG.